We begin with the raw amino-acid sequence, 284 residues long: Methylglyoxal reductase YeaE (284 aa).

It belongs to the aldo/keto reductase family.

It carries out the reaction hydroxyacetone + NADP(+) = methylglyoxal + NADPH + H(+). The catalysed reaction is a primary alcohol + NADP(+) = an aldehyde + NADPH + H(+). Functionally, aldo-keto reductase that contributes to cellular methylglyoxal detoxification by catalyzing the NADPH-dependent conversion of methylglyoxal to acetol. It also exhibits activity with glyoxal and probably plays a significant role in detoxification of glyoxal in vivo. Can also use aromatic aldehydes such as 4-nitrobenzaldehyde, 3-nitrobenzaldehyde and benzaldehyde, and phenylglyoxal. The polypeptide is Methylglyoxal reductase YeaE (yeaE) (Escherichia coli (strain K12)).